The following is a 112-amino-acid chain: T cell receptor alpha variable 9-2 (112 aa).

Positions 1-20 (MNYSPGLVSLILLLLGRTRG) are cleaved as a signal peptide. The 92-residue stretch at 21–112 (DSVTQMEGPV…DSAVYFCALS (92 aa)) folds into the Ig-like domain. Asparagine 41 carries N-linked (GlcNAc...) asparagine glycosylation. A disulfide bond links cysteine 42 and cysteine 109.

In terms of assembly, alpha-beta TR is a heterodimer composed of an alpha and beta chain; disulfide-linked. The alpha-beta TR is associated with the transmembrane signaling CD3 coreceptor proteins to form the TR-CD3 (TcR or TCR). The assembly of alpha-beta TR heterodimers with CD3 occurs in the endoplasmic reticulum where a single alpha-beta TR heterodimer associates with one CD3D-CD3E heterodimer, one CD3G-CD3E heterodimer and one CD247 homodimer forming a stable octameric structure. CD3D-CD3E and CD3G-CD3E heterodimers preferentially associate with TR alpha and TR beta chains, respectively. The association of the CD247 homodimer is the last step of TcR assembly in the endoplasmic reticulum and is required for transport to the cell surface.

It localises to the cell membrane. Its function is as follows. V region of the variable domain of T cell receptor (TR) alpha chain that participates in the antigen recognition. Alpha-beta T cell receptors are antigen specific receptors which are essential to the immune response and are present on the cell surface of T lymphocytes. Recognize peptide-major histocompatibility (MH) (pMH) complexes that are displayed by antigen presenting cells (APC), a prerequisite for efficient T cell adaptive immunity against pathogens. Binding of alpha-beta TR to pMH complex initiates TR-CD3 clustering on the cell surface and intracellular activation of LCK that phosphorylates the ITAM motifs of CD3G, CD3D, CD3E and CD247 enabling the recruitment of ZAP70. In turn ZAP70 phosphorylates LAT, which recruits numerous signaling molecules to form the LAT signalosome. The LAT signalosome propagates signal branching to three major signaling pathways, the calcium, the mitogen-activated protein kinase (MAPK) kinase and the nuclear factor NF-kappa-B (NF-kB) pathways, leading to the mobilization of transcription factors that are critical for gene expression and essential for T cell growth and differentiation. The T cell repertoire is generated in the thymus, by V-(D)-J rearrangement. This repertoire is then shaped by intrathymic selection events to generate a peripheral T cell pool of self-MH restricted, non-autoaggressive T cells. Post-thymic interaction of alpha-beta TR with the pMH complexes shapes TR structural and functional avidity. The sequence is that of T cell receptor alpha variable 9-2 from Homo sapiens (Human).